A 335-amino-acid polypeptide reads, in one-letter code: Protease HtpX homolog (335 aa).

3 helical membrane passes run 9-29 (VYMM…STIA), 42-62 (LFTS…AIIY), and 64-84 (ILAY…LLII). His168 contacts Zn(2+). Glu169 is an active-site residue. Residue His172 participates in Zn(2+) binding. 2 consecutive transmembrane segments (helical) span residues 179 to 199 (AVML…YALL) and 213 to 233 (AAIG…VLAF). Position 238 (Glu238) interacts with Zn(2+).

The protein belongs to the peptidase M48B family. Requires Zn(2+) as cofactor.

It is found in the cell membrane. The polypeptide is Protease HtpX homolog (Archaeoglobus fulgidus (strain ATCC 49558 / DSM 4304 / JCM 9628 / NBRC 100126 / VC-16)).